The sequence spans 306 residues: Homoserine kinase (306 aa).

90-100 (PLARGLGSSAS) serves as a coordination point for ATP.

The protein belongs to the GHMP kinase family. Homoserine kinase subfamily.

It localises to the cytoplasm. It catalyses the reaction L-homoserine + ATP = O-phospho-L-homoserine + ADP + H(+). Its pathway is amino-acid biosynthesis; L-threonine biosynthesis; L-threonine from L-aspartate: step 4/5. Its function is as follows. Catalyzes the ATP-dependent phosphorylation of L-homoserine to L-homoserine phosphate. This chain is Homoserine kinase, found in Staphylococcus epidermidis (strain ATCC 12228 / FDA PCI 1200).